A 398-amino-acid chain; its full sequence is S-adenosylmethionine synthase (398 aa).

ATP is bound at residue H15. Position 17 (D17) interacts with Mg(2+). Residue E43 participates in K(+) binding. L-methionine-binding residues include E56 and Q99. Residues 99 to 109 are flexible loop; the sequence is QSPDIAQGVDT. ATP contacts are provided by residues 175 to 177, 243 to 244, D252, 258 to 259, A275, and K279; these read DGK, RF, and RK. L-methionine is bound at residue D252. Residue K283 participates in L-methionine binding.

The protein belongs to the AdoMet synthase family. Homotetramer; dimer of dimers. The cofactor is Mg(2+). K(+) serves as cofactor.

The protein localises to the cytoplasm. The enzyme catalyses L-methionine + ATP + H2O = S-adenosyl-L-methionine + phosphate + diphosphate. It functions in the pathway amino-acid biosynthesis; S-adenosyl-L-methionine biosynthesis; S-adenosyl-L-methionine from L-methionine: step 1/1. In terms of biological role, catalyzes the formation of S-adenosylmethionine (AdoMet) from methionine and ATP. The overall synthetic reaction is composed of two sequential steps, AdoMet formation and the subsequent tripolyphosphate hydrolysis which occurs prior to release of AdoMet from the enzyme. The polypeptide is S-adenosylmethionine synthase (Parafrankia sp. (strain EAN1pec)).